Consider the following 152-residue polypeptide: Aspartate-rich protein (152 aa).

An N-terminal signal peptide occupies residues 1 to 19 (MQKLLLAVLFFSLLAVATA). The span at 82–113 (ATPKTEAEPGSLDKGEGTKGEKGKEGKKEKGE) shows a compositional bias: basic and acidic residues. The interval 82-152 (ATPKTEAEPG…VHENDDENED (71 aa)) is disordered. Over residues 135–152 (DDDDDRDDVHENDDENED) the composition is skewed to acidic residues.

As to expression, prismatic layer of shell (at protein level). Expressed primarily in the mantle with highest level in the mantle edge and lower level in the mantle pallium.

Its subcellular location is the secreted. The sequence is that of Aspartate-rich protein from Margaritifera margaritifera (Freshwater pearl mussel).